A 353-amino-acid polypeptide reads, in one-letter code: Photosystem II protein D1 (353 aa).

An N-acetylthreonine modification is found at T2. Position 2 is a phosphothreonine (T2). The next 3 membrane-spanning stretches (helical) occupy residues 29–46 (YIGWFGVLMIPTLLTATS), 118–133 (HFLLGVACYMGREWEL), and 142–156 (WIAVAYSAPVAAATA). Position 118 (H118) interacts with chlorophyll a. Y126 contributes to the pheophytin a binding site. Residues D170 and E189 each contribute to the [CaMn4O5] cluster site. A helical membrane pass occupies residues 197–218 (FHMLGVAGVFGGSLFSAMHGSL). Residue H198 coordinates chlorophyll a. Residues H215 and 264 to 265 (SF) each bind a quinone. H215 is a binding site for Fe cation. Fe cation is bound at residue H272. A helical membrane pass occupies residues 274–288 (FLAAWPVVGIWFTAL). [CaMn4O5] cluster-binding residues include H332, E333, D342, and A344. Positions 345 to 353 (AIEAPSTNG) are excised as a propeptide.

The protein belongs to the reaction center PufL/M/PsbA/D family. In terms of assembly, PSII is composed of 1 copy each of membrane proteins PsbA, PsbB, PsbC, PsbD, PsbE, PsbF, PsbH, PsbI, PsbJ, PsbK, PsbL, PsbM, PsbT, PsbX, PsbY, PsbZ, Psb30/Ycf12, at least 3 peripheral proteins of the oxygen-evolving complex and a large number of cofactors. It forms dimeric complexes. The D1/D2 heterodimer binds P680, chlorophylls that are the primary electron donor of PSII, and subsequent electron acceptors. It shares a non-heme iron and each subunit binds pheophytin, quinone, additional chlorophylls, carotenoids and lipids. D1 provides most of the ligands for the Mn4-Ca-O5 cluster of the oxygen-evolving complex (OEC). There is also a Cl(-1) ion associated with D1 and D2, which is required for oxygen evolution. The PSII complex binds additional chlorophylls, carotenoids and specific lipids. serves as cofactor. Post-translationally, tyr-161 forms a radical intermediate that is referred to as redox-active TyrZ, YZ or Y-Z. C-terminally processed by CTPA; processing is essential to allow assembly of the oxygen-evolving complex and thus photosynthetic growth.

It is found in the plastid. The protein resides in the chloroplast thylakoid membrane. It catalyses the reaction 2 a plastoquinone + 4 hnu + 2 H2O = 2 a plastoquinol + O2. Its function is as follows. Photosystem II (PSII) is a light-driven water:plastoquinone oxidoreductase that uses light energy to abstract electrons from H(2)O, generating O(2) and a proton gradient subsequently used for ATP formation. It consists of a core antenna complex that captures photons, and an electron transfer chain that converts photonic excitation into a charge separation. The D1/D2 (PsbA/PsbD) reaction center heterodimer binds P680, the primary electron donor of PSII as well as several subsequent electron acceptors. The polypeptide is Photosystem II protein D1 (Nicotiana debneyi (Debney's tobacco)).